We begin with the raw amino-acid sequence, 400 residues long: Enoyl-[acyl-carrier-protein] reductase [NADH] (400 aa).

NAD(+)-binding positions include 48-53 (GSSSGY), 74-75 (FE), 111-112 (DA), and 139-140 (LA). Y225 lines the substrate pocket. Catalysis depends on Y235, which acts as the Proton donor. NAD(+) is bound by residues K244 and 273–275 (VVT).

This sequence belongs to the TER reductase family. As to quaternary structure, monomer.

The catalysed reaction is a 2,3-saturated acyl-[ACP] + NAD(+) = a (2E)-enoyl-[ACP] + NADH + H(+). Its pathway is lipid metabolism; fatty acid biosynthesis. Functionally, involved in the final reduction of the elongation cycle of fatty acid synthesis (FAS II). Catalyzes the reduction of a carbon-carbon double bond in an enoyl moiety that is covalently linked to an acyl carrier protein (ACP). The sequence is that of Enoyl-[acyl-carrier-protein] reductase [NADH] from Shewanella oneidensis (strain ATCC 700550 / JCM 31522 / CIP 106686 / LMG 19005 / NCIMB 14063 / MR-1).